Reading from the N-terminus, the 383-residue chain is ATP phosphoribosyltransferase regulatory subunit (383 aa).

Belongs to the class-II aminoacyl-tRNA synthetase family. HisZ subfamily. Heteromultimer composed of HisG and HisZ subunits.

It is found in the cytoplasm. The protein operates within amino-acid biosynthesis; L-histidine biosynthesis; L-histidine from 5-phospho-alpha-D-ribose 1-diphosphate: step 1/9. Its function is as follows. Required for the first step of histidine biosynthesis. May allow the feedback regulation of ATP phosphoribosyltransferase activity by histidine. This Desulfitobacterium hafniense (strain Y51) protein is ATP phosphoribosyltransferase regulatory subunit.